Reading from the N-terminus, the 314-residue chain is MLVSGRRRLLTVLLQAQKWPFQPSRDMRLVQFRAPHLVGPHLGLETGNGGGVINLNAFDPTLPKTMTQFLEQGEATLSVARRALAAQLPVLPRSEVTFLAPVTRPDKVVCVGMNYVDHCKEQNVPVPKEPIIFSKFASSIVGPYDEVVLPPQSQEVDWEVELAVVIGKKGKHIKATDAMAHVAGFTVAHDVSARDWQMRRNGKQWLLGKTFDTFCPLGPALVTKDSVADPHNLKICCRVNGEVVQSGNTNQMVFKTEDLIAWVSQFVTFYPGDVILTGTPPGVGVFRKPPVFLKKGDEVQCEIEELGVIINKVV.

A mitochondrion-targeting transit peptide spans 1-84 (MLVSGRRRLL…ATLSVARRAL (84 aa)). Mg(2+) is bound by residues glutamate 159, glutamate 161, and aspartate 190.

This sequence belongs to the FAH family. Requires Mg(2+) as cofactor. Mn(2+) serves as cofactor.

The protein resides in the mitochondrion. The catalysed reaction is oxaloacetate = enol-oxaloacetate. Its function is as follows. Tautomerase that converts enol-oxaloacetate, a strong inhibitor of succinate dehydrogenase, to the physiological keto form of oxaloacetate. It is thereby required to maximize aerobic respiration efficiency by preventing succinate dehydrogenase inhibition. This chain is Oxaloacetate tautomerase FAHD2A, mitochondrial, found in Homo sapiens (Human).